Reading from the N-terminus, the 119-residue chain is UPF0344 protein lp_1373 (119 aa).

4 helical membrane-spanning segments follow: residues 1–21 (MYLLGHIIGWLWLMLTVAIGL), 32–52 (FLILSRIGYLLIIITGVALAI), 60–80 (WLTLLKVILGLGTIGLIEVAF), and 92–112 (LVTLLVCGTLLTIICGIGLHW).

It belongs to the UPF0344 family.

The protein resides in the cell membrane. This is UPF0344 protein lp_1373 from Lactiplantibacillus plantarum (strain ATCC BAA-793 / NCIMB 8826 / WCFS1) (Lactobacillus plantarum).